The chain runs to 397 residues: tRNA-specific 2-thiouridylase MnmA (397 aa).

ATP contacts are provided by residues 19 to 26 (AMSGGVDS) and Leu-45. Residue Cys-113 is the Nucleophile of the active site. An intrachain disulfide couples Cys-113 to Cys-210. Gly-137 is a binding site for ATP. Residues 160 to 162 (RDQ) are interaction with tRNA. The active-site Cysteine persulfide intermediate is Cys-210.

This sequence belongs to the MnmA/TRMU family.

It localises to the cytoplasm. The enzyme catalyses S-sulfanyl-L-cysteinyl-[protein] + uridine(34) in tRNA + AH2 + ATP = 2-thiouridine(34) in tRNA + L-cysteinyl-[protein] + A + AMP + diphosphate + H(+). Catalyzes the 2-thiolation of uridine at the wobble position (U34) of tRNA, leading to the formation of s(2)U34. The polypeptide is tRNA-specific 2-thiouridylase MnmA (Bradyrhizobium sp. (strain BTAi1 / ATCC BAA-1182)).